A 504-amino-acid chain; its full sequence is Zinc finger protein AEBP2 (504 aa).

Residues methionine 1–serine 219 form a disordered region. Alanine 2 is modified (N-acetylalanine). Residues arginine 16–arginine 30 are compositionally biased toward low complexity. Phosphoserine is present on residues serine 18, serine 21, and serine 24. Positions proline 36–alanine 49 are enriched in acidic residues. Over residues glycine 59–glutamate 69 the composition is skewed to gly residues. Positions glycine 86 to serine 110 are enriched in acidic residues. The segment covering serine 129–glycine 140 has biased composition (low complexity). A Phosphoserine modification is found at serine 131. Residues glycine 142–glycine 153 show a composition bias toward basic and acidic residues. Gly residues-rich tracts occupy residues proline 154–serine 168 and glycine 178–serine 189. Phosphoserine is present on residues serine 199, serine 203, and serine 204. The tract at residues methionine 202–valine 287 is interaction with RBBP4. The C2H2-type 1 zinc finger occupies tyrosine 254–histidine 279. The C2H2-type 2; degenerate zinc-finger motif lies at lysine 293 to histidine 315. Residues phenylalanine 321–histidine 345 form a C2H2-type 3 zinc finger. Over residues histidine 345–proline 358 the composition is skewed to polar residues. The tract at residues histidine 345 to proline 387 is disordered. The span at methionine 370–proline 385 shows a compositional bias: basic residues. Serine 383 is modified (phosphoserine). Positions arginine 400–serine 471 are interaction with SUZ12. The interval threonine 488–arginine 504 is important for nucleosome binding activity of the PRC2 complex.

It belongs to the AEBP2/jing C2H2-type zinc-finger family. In terms of assembly, self-associates. Associates with the PRC2 complex, which consists of the core components EED, EZH1 or EZH2, SUZ12, and RBBP4, and various combinations of accessory subunits including AEBP2, JARID2, PHF19, MTF2 and EPOP. Found in a monomeric PRC2.2 (class 2) complex consisting of at least SUZ12, RBBP4, AEBP2 and JARID2. Within the PRC2 complex, interacts directly with SUZ12; competes with PHF19 for SUZ12 binding. Interacts with EED, EZH2, and RBBP4. May also interact with RBBP7. Expressed in brain, brown adipose tissue, white adipose tissue, heart, kidney, lung, skeletal muscle, small intestine and spleen. Expressed at low levels in liver.

It is found in the nucleus. Functionally, acts as an accessory subunit for the core Polycomb repressive complex 2 (PRC2), which mediates histone H3K27 (H3K27me3) trimethylation on chromatin leading to transcriptional repression of the affected target gene. Plays a role in nucleosome localization of the PRC2 complex. The polypeptide is Zinc finger protein AEBP2 (Aebp2) (Mus musculus (Mouse)).